We begin with the raw amino-acid sequence, 336 residues long: Mitochondrial thiamine diphosphate carrier 1 (336 aa).

6 helical membrane-spanning segments follow: residues 11 to 27 (RRAL…GGIS), 88 to 105 (VPAL…FTVL), 127 to 150 (YLSY…FDLL), 182 to 199 (LYSG…YAGL), 230 to 246 (SVSS…AGTF), and 303 to 322 (GLFP…FVVY). 3 Solcar repeats span residues 11 to 111 (RRAL…LKTF), 124 to 210 (LSPY…FKRS), and 231 to 328 (VSSF…ISDW).

The protein belongs to the mitochondrial carrier (TC 2.A.29) family. As to expression, ubiquitous with highest expression in pollen.

It is found in the mitochondrion inner membrane. Mitochondrial transporter that mediates uptake of thiamine diphosphate (ThDP) into mitochondria. The sequence is that of Mitochondrial thiamine diphosphate carrier 1 from Zea mays (Maize).